The primary structure comprises 397 residues: L-cysteine desulfidase (397 aa).

C23 serves as the catalytic Proton acceptor. C288, C330, and C337 together coordinate [4Fe-4S] cluster.

This sequence belongs to the L-cysteine desulfidase family. As to quaternary structure, homotrimer. It depends on [4Fe-4S] cluster as a cofactor.

It catalyses the reaction L-cysteine + H2O = hydrogen sulfide + pyruvate + NH4(+) + H(+). In terms of biological role, catalyzes the cleavage of L-cysteine to form 2-aminoprop-2-enoate and sulfide. The former then spontaneously hydrolyzes to pyruvate and NH(3). May be responsible for the production of sulfide required for the biosynthesis of iron-sulfur centers in this archaea. This Methanococcus maripaludis (strain C5 / ATCC BAA-1333) protein is L-cysteine desulfidase.